We begin with the raw amino-acid sequence, 272 residues long: Magnetosome protein MamQ (272 aa).

The Cytoplasmic segment spans residues 1-46 (MAVSDADASSVDKVESITLQRVKQSEELLAQLYVVEESPRRMGRGP). A helical transmembrane segment spans residues 47-67 (VQLMLAISVLSLVAFITTLLM). At 68 to 272 (RYNAFVTMYE…PLTHSQESKN (205 aa)) the chain is on the lumenal side.

This sequence belongs to the LemA family.

It localises to the magnetosome membrane. Its subcellular location is the cell inner membrane. Its function is as follows. Essential for magnetosome formation. Not essential for formation of magnetosome membrane vesicles. One of 7 genes (mamLQBIEMO) able to induce magnetosome membrane biogenesis; coexpression of mamLQRBIEMO in a deletion of the 17 gene mamAB operon restores magnetosome vesicle formation but not magnetite biosynthesis. The sequence is that of Magnetosome protein MamQ from Magnetospirillum gryphiswaldense (strain DSM 6361 / JCM 21280 / NBRC 15271 / MSR-1).